Here is a 184-residue protein sequence, read N- to C-terminus: ATP synthase subunit b, chloroplastic (184 aa).

A helical transmembrane segment spans residues 27–49; that stretch reads FATNPINLSVVLGVLIFFGKGVL.

This sequence belongs to the ATPase B chain family. In terms of assembly, F-type ATPases have 2 components, F(1) - the catalytic core - and F(0) - the membrane proton channel. F(1) has five subunits: alpha(3), beta(3), gamma(1), delta(1), epsilon(1). F(0) has four main subunits: a(1), b(1), b'(1) and c(10-14). The alpha and beta chains form an alternating ring which encloses part of the gamma chain. F(1) is attached to F(0) by a central stalk formed by the gamma and epsilon chains, while a peripheral stalk is formed by the delta, b and b' chains.

Its subcellular location is the plastid. The protein localises to the chloroplast thylakoid membrane. Functionally, f(1)F(0) ATP synthase produces ATP from ADP in the presence of a proton or sodium gradient. F-type ATPases consist of two structural domains, F(1) containing the extramembraneous catalytic core and F(0) containing the membrane proton channel, linked together by a central stalk and a peripheral stalk. During catalysis, ATP synthesis in the catalytic domain of F(1) is coupled via a rotary mechanism of the central stalk subunits to proton translocation. Component of the F(0) channel, it forms part of the peripheral stalk, linking F(1) to F(0). This Ipomoea purpurea (Common morning glory) protein is ATP synthase subunit b, chloroplastic.